We begin with the raw amino-acid sequence, 208 residues long: Outer-membrane lipoprotein carrier protein (208 aa).

The first 21 residues, 1 to 21 (MKKLNTLLLVLGSLVATPSFA), serve as a signal peptide directing secretion. The disordered stretch occupies residues 188-208 (KSTFEFTPPEGVEIDDQSNGE). The segment covering 199–208 (VEIDDQSNGE) has biased composition (acidic residues).

The protein belongs to the LolA family. In terms of assembly, monomer.

It localises to the periplasm. Participates in the translocation of lipoproteins from the inner membrane to the outer membrane. Only forms a complex with a lipoprotein if the residue after the N-terminal Cys is not an aspartate (The Asp acts as a targeting signal to indicate that the lipoprotein should stay in the inner membrane). The sequence is that of Outer-membrane lipoprotein carrier protein from Pseudoalteromonas translucida (strain TAC 125).